The primary structure comprises 273 residues: Pre-mRNA-splicing factor CWC23 (273 aa).

The region spanning aspartate 15 to leucine 87 is the J domain.

Belongs to the DnaJ family. In terms of assembly, associated with the spliceosome.

The protein resides in the cytoplasm. It is found in the nucleus. Functionally, involved in pre-mRNA splicing. May be involved in endoplasmic reticulum-associated protein degradation (ERAD) and required for growth at low and high temperatures. This chain is Pre-mRNA-splicing factor CWC23 (CWC23), found in Eremothecium gossypii (strain ATCC 10895 / CBS 109.51 / FGSC 9923 / NRRL Y-1056) (Yeast).